Consider the following 543-residue polypeptide: Chaperonin GroEL (543 aa).

ATP is bound by residues 29–32 (TVGP), 86–90 (DGTTT), Gly-413, and Asp-504.

It belongs to the chaperonin (HSP60) family. Forms a cylinder of 14 subunits composed of two heptameric rings stacked back-to-back. Interacts with the co-chaperonin GroES.

Its subcellular location is the cytoplasm. It carries out the reaction ATP + H2O + a folded polypeptide = ADP + phosphate + an unfolded polypeptide.. Its function is as follows. Together with its co-chaperonin GroES, plays an essential role in assisting protein folding. The GroEL-GroES system forms a nano-cage that allows encapsulation of the non-native substrate proteins and provides a physical environment optimized to promote and accelerate protein folding. The polypeptide is Chaperonin GroEL (Mycoplasma pneumoniae (strain ATCC 29342 / M129 / Subtype 1) (Mycoplasmoides pneumoniae)).